The chain runs to 502 residues: MRIGFDHEKYLEEQSKYILERVNNYDKLYLEFGGKLLFDLHAKRVLPGFDENAKIKLLHKLKEKVEIIICLYAGDIERNKIRGDFGITYDVDVLRLIDDLRGYDLEVNSVVITRYSGQPATNIFINKLERRGIKVYRHEATKGYPTDVDTIVSDEGYGKNPYIETTKPIVVVTAPGPGSGKLATCLSQLYHEYKRGNVAGYSKFETFPVWNVPLKHPLNIAYESATVDLKDVNMIDSFHFDAYNKVAVNYNRDIESFPVLKRIIEKITGEESVYKSPTDMGVNRVGFGIVDDEVVKEASKQEIIRRAFKTACEYKKGYVDKETFHRAKLIMEEMNLKEEDRKVVIPAREYAAKLKERANKSETCTVVALELEDGTILTGRSSELMDGTAAVILNAVKHYANISDEIHLISPVILEPIINLKAKTLGSKRTALSCEEVLIALSICAATNPTAQVAMGKLPMLKGCQAHSTTILSTNEEQTFRKLGIDVTCDPEYISESLYYNN.

The protein belongs to the UPF0371 family.

This is UPF0371 protein CLD_0424 from Clostridium botulinum (strain Okra / Type B1).